Here is a 614-residue protein sequence, read N- to C-terminus: Two-component response regulator ORR33 (614 aa).

Positions 14–139 (RVMIIDDDAK…VMARLWRVVA (126 aa)) constitute a Response regulatory domain. A 4-aspartylphosphate modification is found at Asp67. The tract at residues 193–220 (RQLTINVVDDGNRGSGSGGGGGGGADAN) is disordered. The span at 205–217 (RGSGSGGGGGGGA) shows a compositional bias: gly residues.

Belongs to the ARR family. Type-B subfamily. Two-component system major event consists of a His-to-Asp phosphorelay between a sensor histidine kinase (HK) and a response regulator (RR). In plants, the His-to-Asp phosphorelay involves an additional intermediate named Histidine-containing phosphotransfer protein (HPt). This multistep phosphorelay consists of a His-Asp-His-Asp sequential transfer of a phosphate group between first a His and an Asp of the HK protein, followed by the transfer to a conserved His of the HPt protein and finally the transfer to an Asp in the receiver domain of the RR protein.

Functions as a response regulator involved in His-to-Asp phosphorelay signal transduction system. Phosphorylation of the Asp residue in the receiver domain activates the ability of the protein to promote the transcription of target genes. May directly activate some type-A response regulators in response to cytokinins. This is Two-component response regulator ORR33 from Oryza sativa subsp. indica (Rice).